We begin with the raw amino-acid sequence, 428 residues long: Proteinase-activated receptor 1 (428 aa).

Positions 1–21 are cleaved as a signal peptide; sequence MGPQRLLLVAAGLSLCGPLLS. The propeptide at 22–41 is removed for receptor activation; the sequence is SRVPVRQPESEMTDATVNPR. The Extracellular segment spans residues 42–105; sequence SFFLRNPGEN…SGYLTSPWLR (64 aa). Residues Asn65 and Asn78 are each glycosylated (N-linked (GlcNAc...) asparagine). A helical transmembrane segment spans residues 106 to 131; the sequence is LFIPSVYTFVFVVSLPLNILAIAVFV. Topologically, residues 132–140 are cytoplasmic; sequence LKMKVKKPA. A helical transmembrane segment spans residues 141 to 160; sequence VVYMLHLAMADVLFVSVLPL. The Extracellular portion of the chain corresponds to 161 to 179; that stretch reads KISYYFSGSDWQFGSGMCR. Cys178 and Cys257 are oxidised to a cystine. The chain crosses the membrane as a helical span at residues 180-201; sequence FATAAFYCNMYASIMLMTVISI. Topologically, residues 202-221 are cytoplasmic; that stretch reads DRFLAVVYPIQSLSWRTLGR. The helical transmembrane segment at 222–242 threads the bilayer; sequence ANFTCLVIWVMAIMGVVPLLL. Residues 243–271 lie on the Extracellular side of the membrane; that stretch reads KEQTTRVPGLNITTCHDVLNETLLQGFYS. N-linked (GlcNAc...) asparagine glycosylation is found at Asn253 and Asn262. A helical transmembrane segment spans residues 272 to 291; it reads YYFSAFSAVFFLVPLIISTI. Residues 292–314 are Cytoplasmic-facing; sequence CYMSIIRCLSSSSVANRSKKSRA. A helical membrane pass occupies residues 315-337; the sequence is LFLSAAVFCVFIVCFGPTNVLLI. Over 338–352 the chain is Extracellular; sequence MHYLLLSDSPATEKA. Residues 353–377 traverse the membrane as a helical segment; that stretch reads YFAYLLCVCVSSVSCCIDPLIYYYA. Over 378–428 the chain is Cytoplasmic; that stretch reads SSECQRHLYGILCCKESSDPNSYNSTGQLMPSKMDTCSSHLNNSIYKKLLA. Phosphoserine is present on Ser421.

It belongs to the G-protein coupled receptor 1 family. In terms of processing, proteolytic cleavage by thrombin generates a new N-terminus that functions as a tethered ligand. Also proteolytically cleaved by cathepsin CTSG. Phosphorylated in the C-terminal tail; probably mediating desensitization prior to the uncoupling and internalization of the receptor.

The protein localises to the cell membrane. Its function is as follows. High affinity receptor that binds the activated thrombin, leading to calcium release from intracellular stores. The thrombin-activated receptor signaling pathway is mediated through PTX-insensitive G proteins, activation of phospholipase C resulting in the production of 1D-myo-inositol 1,4,5-trisphosphate (InsP3) which binds to InsP3 receptors causing calcium release from the stores. In astrocytes, the calcium released into the cytosol allows the Ca(2+)-dependent release of L-glutamate into the synaptic cleft through BEST1, that targets the neuronal postsynaptic GRIN2A/NMDAR receptor resulting in the synaptic plasticity regulation. May play a role in platelets activation and in vascular development. Mediates up-regulation of pro-inflammatory cytokines, such as MCP-1/CCL2 and IL6, triggered by coagulation factor Xa (F10) in cardiac fibroblasts and umbilical vein endothelial cells. This Cricetulus longicaudatus (Long-tailed dwarf hamster) protein is Proteinase-activated receptor 1.